The chain runs to 884 residues: Receptor-like protein 39 (884 aa).

A signal peptide spans 1 to 24; the sequence is MSELLFRLNFLLLLLLSCVSLASS. Residues 25-847 are Extracellular-facing; it reads FFSFNDPVVG…EEEEQVLNWK (823 aa). 3 N-linked (GlcNAc...) asparagine glycosylation sites follow: Asn-59, Asn-71, and Asn-92. LRR repeat units lie at residues 98–122, 124–146, 147–170, 171–196, 197–223, 225–245, 246–268, 269–292, 294–318, and 320–344; these read FHQL…EFGM, NKLE…SFSN, LSML…VRNL, RKLT…LFEL, HNLA…NLNK, ELLD…ISNL, TQLT…VQNL, TKLS…LFTM, FLSY…SLSS, and LENL…LINL. Asn-146 carries N-linked (GlcNAc...) asparagine glycosylation. Asn-190, Asn-208, Asn-244, and Asn-267 each carry an N-linked (GlcNAc...) asparagine glycan. Residues Asn-304 and Asn-313 are each glycosylated (N-linked (GlcNAc...) asparagine). The LRR 11; degenerate repeat unit spans residues 345 to 365; sequence KELHLSFLNTSYPINLKLFSS. Asn-353 carries N-linked (GlcNAc...) asparagine glycosylation. LRR repeat units follow at residues 366 to 391, 392 to 413, 414 to 438, 440 to 463, and 464 to 487; these read LKYL…SYIP, STLE…ILKT, LPNL…LWSL, RLSS…ILVN, and SSVR…PLSV. N-linked (GlcNAc...) asparagine glycosylation is present at Asn-403. A glycan (N-linked (GlcNAc...) asparagine) is linked at Asn-463. Residues 488 to 507 form an LRR 17; degenerate repeat; sequence NYFSARNNRYGGDIPLSICS. LRR repeat units lie at residues 508 to 529, 530 to 553, 554 to 577, 579 to 601, 602 to 625, 628 to 652, 702 to 725, 726 to 749, 750 to 773, and 775 to 798; these read RRSL…PPCP, SNFL…YYAD, APLR…LLNC, ALQF…LKAL, PKLQ…NQGS, FPEL…FFEN, SSSA…IGLL, KALI…LANL, KKIE…IGTL, and FLAY…QITG. The N-linked (GlcNAc...) asparagine glycan is linked to Asn-520. The N-linked (GlcNAc...) asparagine glycan is linked to Asn-576. Asn-732 is a glycosylation site (N-linked (GlcNAc...) asparagine). A glycan (N-linked (GlcNAc...) asparagine) is linked at Asn-780. A helical transmembrane segment spans residues 848–868; it reads GVGIGYGVGVLLGLAIAQLIA. The Cytoplasmic portion of the chain corresponds to 869 to 884; that stretch reads SYKPEWLVFLFQSRNH.

It belongs to the RLP family.

Its subcellular location is the cell membrane. In Arabidopsis thaliana (Mouse-ear cress), this protein is Receptor-like protein 39.